The following is a 317-amino-acid chain: Apolipoprotein E (317 aa).

An N-terminal signal peptide occupies residues 1 to 18; sequence MKVLWAALLVTFLAGCQA. 8 tandem repeats follow at residues 80 to 101, 102 to 123, 124 to 145, 146 to 167, 168 to 189, 190 to 211, 212 to 233, and 234 to 255. Residues 80 to 255 are 8 X 22 AA approximate tandem repeats; sequence TLMDETMKEL…RLDEVKEQVA (176 aa). Residue methionine 143 is modified to Methionine sulfoxide. Serine 147 bears the Phosphoserine mark. The tract at residues 158–168 is LDL and other lipoprotein receptors binding; the sequence is HLRKLRKRLLR. Heparin is bound at residue 162–165; the sequence is LRKR. The tract at residues 210–290 is lipid-binding and lipoprotein association; sequence AATVGSLASQ…SWFEPLVEDM (81 aa). O-linked (GalNAc...) threonine glycosylation occurs at threonine 212. 229 to 236 serves as a coordination point for heparin; sequence GERLRARM. Residues 266–317 form a homooligomerization region; it reads QQISLQAEAFQARLKSWFEPLVEDMQRQWAGLVEKVQAAVGASTAPVPSDNH. The specificity for association with VLDL stretch occupies residues 278–290; sequence RLKSWFEPLVEDM.

The protein belongs to the apolipoprotein A1/A4/E family. In terms of assembly, homotetramer. May interact with ABCA1; functionally associated with ABCA1 in the biogenesis of HDLs. May interact with APP/A4 amyloid-beta peptide; the interaction is extremely stable in vitro but its physiological significance is unclear. May interact with MAPT. May interact with MAP2. In the cerebrospinal fluid, interacts with secreted SORL1. Interacts with PMEL; this allows the loading of PMEL luminal fragment on ILVs to induce fibril nucleation. Post-translationally, APOE exists as multiple glycosylated and sialylated glycoforms within cells and in plasma. The extent of glycosylation and sialylation are tissue and context specific. Glycated in plasma VLDL. In terms of processing, phosphorylated by FAM20C in the extracellular medium.

The protein localises to the secreted. It localises to the extracellular space. It is found in the extracellular matrix. The protein resides in the extracellular vesicle. Its subcellular location is the endosome. The protein localises to the multivesicular body. In terms of biological role, APOE is an apolipoprotein, a protein associating with lipid particles, that mainly functions in lipoprotein-mediated lipid transport between organs via the plasma and interstitial fluids. APOE is a core component of plasma lipoproteins and is involved in their production, conversion and clearance. Apolipoproteins are amphipathic molecules that interact both with lipids of the lipoprotein particle core and the aqueous environment of the plasma. As such, APOE associates with chylomicrons, chylomicron remnants, very low density lipoproteins (VLDL) and intermediate density lipoproteins (IDL) but shows a preferential binding to high-density lipoproteins (HDL). It also binds a wide range of cellular receptors including the LDL receptor/LDLR, the LDL receptor-related proteins LRP1, LRP2 and LRP8 and the very low-density lipoprotein receptor/VLDLR that mediate the cellular uptake of the APOE-containing lipoprotein particles. Finally, APOE also has a heparin-binding activity and binds heparan-sulfate proteoglycans on the surface of cells, a property that supports the capture and the receptor-mediated uptake of APOE-containing lipoproteins by cells. A main function of APOE is to mediate lipoprotein clearance through the uptake of chylomicrons, VLDLs, and HDLs by hepatocytes. APOE is also involved in the biosynthesis by the liver of VLDLs as well as their uptake by peripheral tissues ensuring the delivery of triglycerides and energy storage in muscle, heart and adipose tissues. By participating in the lipoprotein-mediated distribution of lipids among tissues, APOE plays a critical role in plasma and tissues lipid homeostasis. APOE is also involved in two steps of reverse cholesterol transport, the HDLs-mediated transport of cholesterol from peripheral tissues to the liver, and thereby plays an important role in cholesterol homeostasis. First, it is functionally associated with ABCA1 in the biogenesis of HDLs in tissues. Second, it is enriched in circulating HDLs and mediates their uptake by hepatocytes. APOE also plays an important role in lipid transport in the central nervous system, regulating neuron survival and sprouting. In Macaca nemestrina (Pig-tailed macaque), this protein is Apolipoprotein E (APOE).